An 86-amino-acid polypeptide reads, in one-letter code: MAQKKGGGSTRNGRDSESKRLGVKVFGGQAINAGGIIVRQRGTRVHAGENVGIGKDHTLFALVDGHVQFAVKGAAKKQQVSVVPAA.

It belongs to the bacterial ribosomal protein bL27 family.

The chain is Large ribosomal subunit protein bL27 from Cupriavidus metallidurans (strain ATCC 43123 / DSM 2839 / NBRC 102507 / CH34) (Ralstonia metallidurans).